The following is a 432-amino-acid chain: Histidine--tRNA ligase (432 aa).

This sequence belongs to the class-II aminoacyl-tRNA synthetase family. Homodimer.

It is found in the cytoplasm. The enzyme catalyses tRNA(His) + L-histidine + ATP = L-histidyl-tRNA(His) + AMP + diphosphate + H(+). The protein is Histidine--tRNA ligase of Symbiobacterium thermophilum (strain DSM 24528 / JCM 14929 / IAM 14863 / T).